The chain runs to 206 residues: Isochorismatase family protein 1B (206 aa).

It belongs to the isochorismatase family.

In Dictyostelium discoideum (Social amoeba), this protein is Isochorismatase family protein 1B.